A 1216-amino-acid chain; its full sequence is ATP-dependent helicase/nuclease subunit A (1216 aa).

A UvrD-like helicase ATP-binding domain is found at 26-488; sequence QKKTAEQIEA…ILLKENFRSS (463 aa). 47–54 is a binding site for ATP; the sequence is ASAGSGKT. The UvrD-like helicase C-terminal domain occupies 515-802; that stretch reads KHQLVFANTK…ELMTIHKSKG (288 aa).

It belongs to the helicase family. AddA subfamily. In terms of assembly, heterodimer of AddA and AddB/RexB. It depends on Mg(2+) as a cofactor.

The enzyme catalyses Couples ATP hydrolysis with the unwinding of duplex DNA by translocating in the 3'-5' direction.. It carries out the reaction ATP + H2O = ADP + phosphate + H(+). Functionally, the heterodimer acts as both an ATP-dependent DNA helicase and an ATP-dependent, dual-direction single-stranded exonuclease. Recognizes the chi site generating a DNA molecule suitable for the initiation of homologous recombination. The AddA nuclease domain is required for chi fragment generation; this subunit has the helicase and 3' -&gt; 5' nuclease activities. This Streptococcus pneumoniae (strain CGSP14) protein is ATP-dependent helicase/nuclease subunit A.